A 330-amino-acid polypeptide reads, in one-letter code: Aspartate--ammonia ligase (330 aa).

The protein belongs to the class-II aminoacyl-tRNA synthetase family. AsnA subfamily.

The protein resides in the cytoplasm. It catalyses the reaction L-aspartate + NH4(+) + ATP = L-asparagine + AMP + diphosphate + H(+). Its pathway is amino-acid biosynthesis; L-asparagine biosynthesis; L-asparagine from L-aspartate (ammonia route): step 1/1. This is Aspartate--ammonia ligase from Glaesserella parasuis serovar 5 (strain SH0165) (Haemophilus parasuis).